We begin with the raw amino-acid sequence, 298 residues long: 5,10-methylenetetrahydrofolate reductase (298 aa).

Glu28 serves as the catalytic Proton donor/acceptor. Thr59 lines the NADH pocket. Residues Tyr60, Ala62, His88, Arg118, Gly119, Asp120, Ala132, Tyr152, His156, Ala159, Asp165, Asn168, and Lys172 each coordinate FAD. Asp120 contacts (6S)-5-methyl-5,6,7,8-tetrahydrofolate. Gln183 is a binding site for NADH. Residues Gln183, Gln219, and Arg279 each coordinate (6S)-5-methyl-5,6,7,8-tetrahydrofolate.

The protein belongs to the methylenetetrahydrofolate reductase family. The cofactor is FAD.

It carries out the reaction (6S)-5-methyl-5,6,7,8-tetrahydrofolate + NAD(+) = (6R)-5,10-methylene-5,6,7,8-tetrahydrofolate + NADH + H(+). It participates in one-carbon metabolism; tetrahydrofolate interconversion. It functions in the pathway amino-acid biosynthesis; L-methionine biosynthesis via de novo pathway. Catalyzes the NADH-dependent reduction of 5,10-methylenetetrahydrofolate to 5-methyltetrahydrofolate. Is required to provide the methyl group necessary for methionine synthetase to convert homocysteine to methionine; the methyl group is given by 5-methyltetrahydrofolate. The protein is 5,10-methylenetetrahydrofolate reductase (metF) of Pectobacterium carotovorum subsp. carotovorum (Erwinia carotovora subsp. carotovora).